The chain runs to 385 residues: Nuclear hormone receptor family member nhr-68 (385 aa).

Positions 4-79 (KEVCLVCQDF…VGMDKTSLQA (76 aa)) form a DNA-binding region, nuclear receptor. NR C4-type zinc fingers lie at residues 7–27 (CLVCQDFSSGYHYGIPSCNGC) and 43–62 (CQFDQNCPVDKSIRCACRFC). The interval 81–110 (RDPIGYTKRNKKTLRHPMNELSGDESNSCT) is disordered. In terms of domain architecture, NR LBD spans 145–384 (PKRSLKQALC…SFAKELIFGD (240 aa)). The interval 373 to 384 (FTSFAKELIFGD) is AF-2.

The protein belongs to the nuclear hormone receptor family.

The protein localises to the nucleus. Probable transcription factor that acts in a feed-forward loop with nhr-10 to activate genes, including itself, involved in the vitamin B12-independent breakdown of the short-chain fatty acid propionate. This pathway is triggered in response to a diet low in vitamin B12, when canonical vitamin B12-dependent propionate breakdown cannot function; the resulting accumulation of propionate is probably sensed by nhr-68 and/or nhr-10. In Caenorhabditis elegans, this protein is Nuclear hormone receptor family member nhr-68.